The sequence spans 217 residues: Peptide methionine sulfoxide reductase MsrA (217 aa).

The active site involves C56.

It belongs to the MsrA Met sulfoxide reductase family.

It carries out the reaction L-methionyl-[protein] + [thioredoxin]-disulfide + H2O = L-methionyl-(S)-S-oxide-[protein] + [thioredoxin]-dithiol. The catalysed reaction is [thioredoxin]-disulfide + L-methionine + H2O = L-methionine (S)-S-oxide + [thioredoxin]-dithiol. Functionally, has an important function as a repair enzyme for proteins that have been inactivated by oxidation. Catalyzes the reversible oxidation-reduction of methionine sulfoxide in proteins to methionine. This is Peptide methionine sulfoxide reductase MsrA from Rippkaea orientalis (strain PCC 8801 / RF-1) (Cyanothece sp. (strain PCC 8801)).